The following is a 701-amino-acid chain: Elongation factor G 2 (701 aa).

The 283-residue stretch at Glu-8 to Ala-290 folds into the tr-type G domain. GTP-binding positions include Ala-17–Thr-24, Asp-88–His-92, and Asn-142–Asp-145.

This sequence belongs to the TRAFAC class translation factor GTPase superfamily. Classic translation factor GTPase family. EF-G/EF-2 subfamily.

Its subcellular location is the cytoplasm. Functionally, catalyzes the GTP-dependent ribosomal translocation step during translation elongation. During this step, the ribosome changes from the pre-translocational (PRE) to the post-translocational (POST) state as the newly formed A-site-bound peptidyl-tRNA and P-site-bound deacylated tRNA move to the P and E sites, respectively. Catalyzes the coordinated movement of the two tRNA molecules, the mRNA and conformational changes in the ribosome. The sequence is that of Elongation factor G 2 from Cupriavidus pinatubonensis (strain JMP 134 / LMG 1197) (Cupriavidus necator (strain JMP 134)).